A 782-amino-acid polypeptide reads, in one-letter code: Ribosome biogenesis protein ERB1 (782 aa).

The span at 1–11 (MSVNSRKRKVA) shows a compositional bias: basic residues. The segment at 1-120 (MSVNSRKRKV…LEGEEDESLK (120 aa)) is disordered. 2 stretches are compositionally biased toward acidic residues: residues 39-51 (DESE…EDTD) and 59-75 (LSDE…DEAE). The segment covering 82–92 (RNLNTSGGSQQ) has biased composition (polar residues). The span at 106–117 (GADGELEGEEDE) shows a compositional bias: acidic residues. 2 WD repeats span residues 432 to 471 (GQEG…QVWN) and 475 to 516 (SDEE…PDVE). The disordered stretch occupies residues 533 to 556 (KPSTAANGEAPKQSPGKWSRPGSR). WD repeat units lie at residues 612-652 (RLKG…KILQ), 653-692 (PGAK…KPYK), 696-736 (FHKE…DLME), and 752-782 (KSRL…RLWN).

Belongs to the WD repeat BOP1/ERB1 family. As to quaternary structure, component of the NOP7 complex, composed of ERB1, NOP7 and YTM1. The complex is held together by ERB1, which interacts with NOP7 via its N-terminal domain and with YTM1 via a high-affinity interaction between the seven-bladed beta-propeller domains of the 2 proteins. The NOP7 complex associates with the 66S pre-ribosome.

The protein resides in the nucleus. It localises to the nucleolus. It is found in the nucleoplasm. Functionally, component of the NOP7 complex, which is required for maturation of the 25S and 5.8S ribosomal RNAs and formation of the 60S ribosome. The sequence is that of Ribosome biogenesis protein ERB1 from Phaeosphaeria nodorum (strain SN15 / ATCC MYA-4574 / FGSC 10173) (Glume blotch fungus).